The chain runs to 453 residues: Gastrin/cholecystokinin type B receptor (453 aa).

At 1-57 (MELLKLNRSAQGSGAGPGASLCRAGGALLNSSGAGNLSCEPPRLRGAGTRELELAIR) the chain is on the extracellular side. 3 N-linked (GlcNAc...) asparagine glycosylation sites follow: Asn-7, Asn-30, and Asn-36. Residues 58–79 (VTLYAVIFLMSVGGNVLIIVVL) traverse the membrane as a helical segment. Residues 80 to 87 (GLSRRLRT) lie on the Cytoplasmic side of the membrane. Residues 88 to 109 (VTNAFLLSLAVSDLLLAVACMP) form a helical membrane-spanning segment. Residues 110-131 (FTLLPNLMGTFIFGTVVCKAVS) lie on the Extracellular side of the membrane. Cys-127 and Cys-206 are disulfide-bonded. The chain crosses the membrane as a helical span at residues 132-150 (YLMGVSVSVSTLSLVAIAL). Residues 151–170 (ERYSAICRPLQARVWQTRSH) are Cytoplasmic-facing. A helical transmembrane segment spans residues 171 to 189 (AARVIIATWMLSGLLMVPY). Topologically, residues 190–220 (PVYTAVQPAGGARALQCVHRWPSARVRQTWS) are extracellular. Residues 221-243 (VLLLLLLFFVPGVVMAVAYGLIS) traverse the membrane as a helical segment. The Cytoplasmic segment spans residues 244–339 (RELYLGLRFD…KLLAKKRVVR (96 aa)). Residues 258 to 286 (SESRVRSQGGLRGGAGPGPAPPNGSCRPE) form a disordered region. The chain crosses the membrane as a helical span at residues 340-361 (MLLVIVVLFFLCWLPLYSANTW). The Extracellular portion of the chain corresponds to 362 to 379 (RAFDSSGAHRALSGAPIS). A helical membrane pass occupies residues 380–400 (FIHLLSYASACVNPLVYCFMH). The Cytoplasmic segment spans residues 401–453 (RRFRQACLETCARCCPRPPRARPRPLPDEDPPTPSIASLSRLSYTTISTLGPG). Residue Cys-414 is the site of S-palmitoyl cysteine attachment. A disordered region spans residues 422–453 (RPRPLPDEDPPTPSIASLSRLSYTTISTLGPG). Positions 435–453 (SIASLSRLSYTTISTLGPG) are enriched in polar residues.

Belongs to the G-protein coupled receptor 1 family. Parietal cells, pancreas, brain and various neoplastic tissues.

The protein localises to the cell membrane. Functionally, receptor for gastrin and cholecystokinin. The CCK-B receptors occur throughout the central nervous system where they modulate anxiety, analgesia, arousal, and neuroleptic activity. This receptor mediates its action by association with G proteins that activate a phosphatidylinositol-calcium second messenger system. The sequence is that of Gastrin/cholecystokinin type B receptor (CCKBR) from Canis lupus familiaris (Dog).